A 134-amino-acid polypeptide reads, in one-letter code: NADH-quinone oxidoreductase subunit A (134 aa).

A run of 3 helical transmembrane segments spans residues 12-32 (FAIY…LAAL), 64-84 (FYLV…LFAW), and 93-113 (WVGF…LLYL).

The protein belongs to the complex I subunit 3 family. As to quaternary structure, NDH-1 is composed of 14 different subunits. Subunits NuoA, H, J, K, L, M, N constitute the membrane sector of the complex.

It is found in the cell inner membrane. It catalyses the reaction a quinone + NADH + 5 H(+)(in) = a quinol + NAD(+) + 4 H(+)(out). In terms of biological role, NDH-1 shuttles electrons from NADH, via FMN and iron-sulfur (Fe-S) centers, to quinones in the respiratory chain. The immediate electron acceptor for the enzyme in this species is believed to be ubiquinone. Couples the redox reaction to proton translocation (for every two electrons transferred, four hydrogen ions are translocated across the cytoplasmic membrane), and thus conserves the redox energy in a proton gradient. In Aeromonas salmonicida (strain A449), this protein is NADH-quinone oxidoreductase subunit A.